We begin with the raw amino-acid sequence, 182 residues long: Transmembrane and coiled-coil domain-containing protein 2 (182 aa).

The chain crosses the membrane as a helical span at residues 51 to 71 (VQIILRISFLILLGIGIYALW). The stretch at 124 to 151 (GLQEKILKKLKTVENKMKNLEGIIVAQK) forms a coiled coil.

It is found in the membrane. The sequence is that of Transmembrane and coiled-coil domain-containing protein 2 (TMCO2) from Homo sapiens (Human).